Reading from the N-terminus, the 136-residue chain is Large ribosomal subunit protein uL16 (136 aa).

This sequence belongs to the universal ribosomal protein uL16 family. In terms of assembly, part of the 50S ribosomal subunit.

In terms of biological role, binds 23S rRNA and is also seen to make contacts with the A and possibly P site tRNAs. This Erwinia tasmaniensis (strain DSM 17950 / CFBP 7177 / CIP 109463 / NCPPB 4357 / Et1/99) protein is Large ribosomal subunit protein uL16.